Reading from the N-terminus, the 286-residue chain is Cytochrome c oxidase subunit 3 (286 aa).

8 helical membrane passes run 13–33, 40–60, 85–105, 133–153, 173–195, 199–221, 223–243, and 253–273; these read GVFL…GVVI, VGTF…CFLI, IIQY…VVFF, IILD…NIIL, LCRE…LLFI, VWEF…LFSI, TLHF…IFNI, and IVLI…WFFL.

The protein belongs to the cytochrome c oxidase subunit 3 family. As to quaternary structure, component of the cytochrome c oxidase (complex IV, CIV), a multisubunit enzyme composed of a catalytic core of 3 subunits and several supernumerary subunits. The complex exists as a monomer or a dimer and forms supercomplexes (SCs) in the inner mitochondrial membrane with ubiquinol-cytochrome c oxidoreductase (cytochrome b-c1 complex, complex III, CIII).

It is found in the mitochondrion inner membrane. It catalyses the reaction 4 Fe(II)-[cytochrome c] + O2 + 8 H(+)(in) = 4 Fe(III)-[cytochrome c] + 2 H2O + 4 H(+)(out). Its function is as follows. Component of the cytochrome c oxidase, the last enzyme in the mitochondrial electron transport chain which drives oxidative phosphorylation. The respiratory chain contains 3 multisubunit complexes succinate dehydrogenase (complex II, CII), ubiquinol-cytochrome c oxidoreductase (cytochrome b-c1 complex, complex III, CIII) and cytochrome c oxidase (complex IV, CIV), that cooperate to transfer electrons derived from NADH and succinate to molecular oxygen, creating an electrochemical gradient over the inner membrane that drives transmembrane transport and the ATP synthase. Cytochrome c oxidase is the component of the respiratory chain that catalyzes the reduction of oxygen to water. Electrons originating from reduced cytochrome c in the intermembrane space (IMS) are transferred via the dinuclear copper A center (CU(A)) of subunit 2 and heme A of subunit 1 to the active site in subunit 1, a binuclear center (BNC) formed by heme A3 and copper B (CU(B)). The BNC reduces molecular oxygen to 2 water molecules using 4 electrons from cytochrome c in the IMS and 4 protons from the mitochondrial matrix. The sequence is that of Cytochrome c oxidase subunit 3 (COIII) from Trypanoplasma borreli.